We begin with the raw amino-acid sequence, 236 residues long: Small ribosomal subunit protein uS3c (236 aa).

The region spanning 47–127 (VRKYVRSSSR…KLNMTLSQVA (81 aa)) is the KH type-2 domain.

The protein belongs to the universal ribosomal protein uS3 family. In terms of assembly, part of the 30S ribosomal subunit.

The protein localises to the plastid. The protein resides in the chloroplast. In Zygnema circumcarinatum (Green alga), this protein is Small ribosomal subunit protein uS3c (rps3).